The primary structure comprises 291 residues: D-alanyl-D-alanine carboxypeptidase DacB2 (291 aa).

An N-terminal signal peptide occupies residues 1 to 22; it reads MRKLMTATAALCACAVTVSAGA. The active-site Acyl-ester intermediate is the serine 69. Lysine 72 serves as the catalytic Proton acceptor. The active site involves serine 124.

It belongs to the peptidase S11 family.

It localises to the periplasm. Its pathway is cell wall biogenesis; peptidoglycan biosynthesis. Its activity is regulated as follows. Inhibited by the beta-lactam antibiotic meropenem. Inhibited by the non-specific inhibitor phenylmethylsulfonyl fluoride (PMSF). In terms of biological role, probably cleaves the terminal D-Ala-D-Ala dipeptide of the peptidoglycan stem peptide. Shows significant D,D-carboxypeptidase activity in vitro. Acts on the synthetic penta-peptide substrate Penta-DAP (L-Ala-gamma-D-Gln-DAP-D-Ala-D-Ala). Also shows weak activity on Penta-Lys (L-Ala-gamma-Glu-L-Lys-D-Ala-D-Ala). The catalytic domain binds weakly to peptidoglycan in vitro. Plays an important role in the maintenance of colony morphology and cell wall permeability and integrity. This Mycobacterium tuberculosis (strain ATCC 25618 / H37Rv) protein is D-alanyl-D-alanine carboxypeptidase DacB2.